The primary structure comprises 98 residues: Guanine nucleotide-binding protein subunit gamma 1 (98 aa).

In terms of domain architecture, G protein gamma spans 19–98; that stretch reads GKHRILAELA…GGEGCRCLIL (80 aa). Positions 20 to 50 form a coiled coil; the sequence is KHRILAELARVEQEVAFLEKELKEVENTDIV. The tract at residues 88–94 is regulates lipidation and cell membrane subcellular localization; it reads NGGEGCR. Cys93 carries the S-palmitoyl cysteine lipid modification. At Cys95 the chain carries Cysteine methyl ester. The S-farnesyl cysteine moiety is linked to residue Cys95. The propeptide at 96–98 is removed in mature form; the sequence is LIL.

In terms of assembly, g proteins are composed of 3 units, alpha, beta and gamma. Interacts with the beta subunit GB1. The dimer GB1-GG1 interacts with NDL1, NDL2 and NDL3. Binds to NUDT7. Mostly expressed in seedlings (especially at the hypocotyl/root junction), young cauline leaves, open flowers, and floral stems, and, to a lower extent, in roots (restricted to the stele), rosette leaves (restricted to veins), siliques, and unopened floral buds. Also present in hydathods.

The protein localises to the cell membrane. It localises to the golgi apparatus membrane. It is found in the golgi apparatus. Its subcellular location is the trans-Golgi network membrane. The protein resides in the cytoplasm. Functionally, guanine nucleotide-binding proteins (G proteins) are involved as a modulator or transducer in various transmembrane signaling systems. The beta and gamma chains are required for the GTPase activity, for replacement of GDP by GTP, and for G protein-effector interaction. Involved in the abscisic acid (ABA) and ethylene signaling pathways. Regulates acropetal transport of auxin (IAA) in roots and hypocotyls, and thus modulates root architecture (e.g. lateral root formation). The heterotrimeric G-protein controls defense responses to necrotrophic and vascular fungi probably by modulating cell wall-related genes expression; involved in resistance to fungal pathogens such as Alternaria brassicicola, Plectosphaerella cucumerina and Fusarium oxysporum. This is Guanine nucleotide-binding protein subunit gamma 1 (GG1) from Arabidopsis thaliana (Mouse-ear cress).